Reading from the N-terminus, the 204-residue chain is Leucyl/phenylalanyl-tRNA--protein transferase (204 aa).

The protein belongs to the L/F-transferase family.

The protein resides in the cytoplasm. The enzyme catalyses N-terminal L-lysyl-[protein] + L-leucyl-tRNA(Leu) = N-terminal L-leucyl-L-lysyl-[protein] + tRNA(Leu) + H(+). The catalysed reaction is N-terminal L-arginyl-[protein] + L-leucyl-tRNA(Leu) = N-terminal L-leucyl-L-arginyl-[protein] + tRNA(Leu) + H(+). It catalyses the reaction L-phenylalanyl-tRNA(Phe) + an N-terminal L-alpha-aminoacyl-[protein] = an N-terminal L-phenylalanyl-L-alpha-aminoacyl-[protein] + tRNA(Phe). Functions in the N-end rule pathway of protein degradation where it conjugates Leu, Phe and, less efficiently, Met from aminoacyl-tRNAs to the N-termini of proteins containing an N-terminal arginine or lysine. The sequence is that of Leucyl/phenylalanyl-tRNA--protein transferase from Rhizobium etli (strain CIAT 652).